Reading from the N-terminus, the 339-residue chain is Phosphoribosylformylglycinamidine cyclo-ligase (339 aa).

It belongs to the AIR synthase family.

It localises to the cytoplasm. The catalysed reaction is 2-formamido-N(1)-(5-O-phospho-beta-D-ribosyl)acetamidine + ATP = 5-amino-1-(5-phospho-beta-D-ribosyl)imidazole + ADP + phosphate + H(+). The protein operates within purine metabolism; IMP biosynthesis via de novo pathway; 5-amino-1-(5-phospho-D-ribosyl)imidazole from N(2)-formyl-N(1)-(5-phospho-D-ribosyl)glycinamide: step 2/2. This chain is Phosphoribosylformylglycinamidine cyclo-ligase, found in Fusobacterium nucleatum subsp. nucleatum (strain ATCC 25586 / DSM 15643 / BCRC 10681 / CIP 101130 / JCM 8532 / KCTC 2640 / LMG 13131 / VPI 4355).